A 309-amino-acid chain; its full sequence is Protein RTM1 (309 aa).

7 consecutive transmembrane segments (helical) span residues A22 to W42, T83 to A103, I119 to F139, F162 to A182, L193 to F213, W233 to V253, and A278 to F298.

Belongs to the lipid-translocating exporter (LTE) (TC 9.A.26.1) family.

Its subcellular location is the membrane. Confers resistance to molasses (to a particular toxic element present in some molasses). This chain is Protein RTM1 (RTM1), found in Saccharomyces cerevisiae (Baker's yeast).